The primary structure comprises 471 residues: NADH-quinone oxidoreductase subunit N (471 aa).

The next 14 helical transmembrane spans lie at 6-26 (FILPEIFISLSIMFLLLLGVY), 30-50 (SSNIVHNLAVGSLLITGILIF), 70-90 (LSSFMKILTILGGAFVLSIST), 98-118 (IFLIEYPVLILSSILGMMVMI), 123-143 (LMVFYIGLELQSLALYVLASF), 158-178 (FVLSALSSGLLLYGCSLVYGF), 198-218 (LTFGIVFILVGLAFKISAVPF), 230-250 (PTAVTLFFAIVPKVAALTVFI), 264-284 (WQPILIFLSIASMIFGAIAAI), 292-312 (LIAYSSIGHMGYALAGLSTGS), 320-340 (IVYMSIYLVMNLAFFSCLLML), 365-385 (LSLLAILFSLAGIPPLAGFFA), 400-420 (FLAIVGLLSTVIAAFYYLKII), and 438-458 (IWLKGSLTFSTLLILLYFIFP).

This sequence belongs to the complex I subunit 2 family. In terms of assembly, NDH-1 is composed of 14 different subunits. Subunits NuoA, H, J, K, L, M, N constitute the membrane sector of the complex.

It localises to the cell inner membrane. The catalysed reaction is a quinone + NADH + 5 H(+)(in) = a quinol + NAD(+) + 4 H(+)(out). In terms of biological role, NDH-1 shuttles electrons from NADH, via FMN and iron-sulfur (Fe-S) centers, to quinones in the respiratory chain. The immediate electron acceptor for the enzyme in this species is believed to be ubiquinone. Couples the redox reaction to proton translocation (for every two electrons transferred, four hydrogen ions are translocated across the cytoplasmic membrane), and thus conserves the redox energy in a proton gradient. In Pelagibacter ubique (strain HTCC1062), this protein is NADH-quinone oxidoreductase subunit N.